Here is an 809-residue protein sequence, read N- to C-terminus: Lon protease (809 aa).

Residues 20–216 (LPLLALRDVV…ELMNYLMNQS (197 aa)) enclose the Lon N-terminal domain. Residue 369–376 (GPPGVGKT) coordinates ATP. Positions 606 to 787 (EAQVGRVNGL…DEILPLALTS (182 aa)) constitute a Lon proteolytic domain. Residues Ser693 and Lys736 contribute to the active site.

It belongs to the peptidase S16 family. In terms of assembly, homohexamer. Organized in a ring with a central cavity.

Its subcellular location is the cytoplasm. It catalyses the reaction Hydrolysis of proteins in presence of ATP.. Its function is as follows. ATP-dependent serine protease that mediates the selective degradation of mutant and abnormal proteins as well as certain short-lived regulatory proteins. Required for cellular homeostasis and for survival from DNA damage and developmental changes induced by stress. Degrades polypeptides processively to yield small peptide fragments that are 5 to 10 amino acids long. Binds to DNA in a double-stranded, site-specific manner. The sequence is that of Lon protease from Acinetobacter baumannii (strain AB307-0294).